The chain runs to 590 residues: Putative ferric-chelate reductase 1 (590 aa).

Residues 2-22 traverse the membrane as a helical segment; sequence NPLGLFLIYLYTCALTPVSGY. Positions 12-179 constitute a Reelin domain; sequence YTCALTPVSG…APKIPSSTIP (168 aa). In terms of domain architecture, DOMON spans 217–330; that stretch reads ECFFLSFRKD…RSYFIFLADG (114 aa). The region spanning 334-533 is the Cytochrome b561 domain; sequence DGLLYRHHRQ…VFVDLLLEAH (200 aa). A helical transmembrane segment spans residues 371–391; it reads LHGAMMFIAWMTTVSIGVIIA. Heme b contacts are provided by histidine 372 and histidine 413. 2 helical membrane passes run 416-436 and 445-465; these read LMITTVFLTVVAFVLPFIYRG and HPHLGVTVMILTVLQPVLAVF. Histidine 445 is a binding site for heme b. Asparagine 478 carries N-linked (GlcNAc...) asparagine glycosylation. A heme b-binding site is contributed by histidine 481. 3 consecutive transmembrane segments (helical) span residues 482–502, 517–537, and 567–587; these read WATGTAARIIAVAAMFLGMDL, IGFVLWHVFVDLLLEAHGFCL, and IVMTVYICGNLAFLITFLAAI.

Belongs to the FRRS1 family. Heme b is required as a cofactor.

The protein resides in the membrane. Putative ferric-chelate reductases reduce Fe(3+) to Fe(2+) before its transport from the endosome to the cytoplasm. The chain is Putative ferric-chelate reductase 1 (frrs1) from Xenopus laevis (African clawed frog).